Consider the following 448-residue polypeptide: UDP-N-acetylmuramoylalanine--D-glutamate ligase (448 aa).

112 to 118 (GSNAKST) is an ATP binding site.

This sequence belongs to the MurCDEF family.

Its subcellular location is the cytoplasm. It catalyses the reaction UDP-N-acetyl-alpha-D-muramoyl-L-alanine + D-glutamate + ATP = UDP-N-acetyl-alpha-D-muramoyl-L-alanyl-D-glutamate + ADP + phosphate + H(+). It participates in cell wall biogenesis; peptidoglycan biosynthesis. In terms of biological role, cell wall formation. Catalyzes the addition of glutamate to the nucleotide precursor UDP-N-acetylmuramoyl-L-alanine (UMA). The protein is UDP-N-acetylmuramoylalanine--D-glutamate ligase of Acinetobacter baumannii (strain AB307-0294).